The primary structure comprises 320 residues: ATP-dependent 6-phosphofructokinase (320 aa).

G12 contributes to the ATP binding site. ADP contacts are provided by residues 22 to 26 and 55 to 60; these read RGVVR and RYSVSD. ATP is bound by residues 73 to 74 and 103 to 106; these read RF and GDGS. D104 is a Mg(2+) binding site. 126-128 is a substrate binding site; sequence TID. The active-site Proton acceptor is D128. R155 is an ADP binding site. Residues R163 and 170–172 contribute to the substrate site; that span reads MGR. ADP-binding positions include 186 to 188, K212, and 214 to 216; these read GCE and KKH. Residues E223, R244, and 250-253 each bind substrate; that span reads HIQR.

It belongs to the phosphofructokinase type A (PFKA) family. ATP-dependent PFK group I subfamily. Prokaryotic clade 'B1' sub-subfamily. Homotetramer. It depends on Mg(2+) as a cofactor.

It is found in the cytoplasm. It catalyses the reaction beta-D-fructose 6-phosphate + ATP = beta-D-fructose 1,6-bisphosphate + ADP + H(+). It functions in the pathway carbohydrate degradation; glycolysis; D-glyceraldehyde 3-phosphate and glycerone phosphate from D-glucose: step 3/4. Its activity is regulated as follows. Allosterically activated by ADP and other diphosphonucleosides, and allosterically inhibited by phosphoenolpyruvate. Catalyzes the phosphorylation of D-fructose 6-phosphate to fructose 1,6-bisphosphate by ATP, the first committing step of glycolysis. The chain is ATP-dependent 6-phosphofructokinase from Erwinia tasmaniensis (strain DSM 17950 / CFBP 7177 / CIP 109463 / NCPPB 4357 / Et1/99).